The following is a 517-amino-acid chain: Synaptic vesicular amine transporter (517 aa).

The Cytoplasmic portion of the chain corresponds to 1–20; it reads MALSDLVLLRWLRDSRHSRK. A helical transmembrane segment spans residues 21–41; sequence LILFIVFLALLLDNMLLTVVV. Residues 42–132 lie on the Extracellular side of the membrane; sequence PIIPSYLYSI…EDKDLLNENV (91 aa). Residues Asn-56, Asn-83, Asn-84, Asn-91, and Asn-113 are each glycosylated (N-linked (GlcNAc...) asparagine). The disordered stretch occupies residues 100–119; it reads ESPKATTTQHTVTNTTVPPD. Over residues 105–115 the composition is skewed to low complexity; sequence TTTQHTVTNTT. Cys-120 and Cys-327 are joined by a disulfide. Residues 133–153 form a helical membrane-spanning segment; sequence QVGLLFASKATVQLLTNPFIG. At 154-162 the chain is on the cytoplasmic side; that stretch reads LLTNRIGYP. A helical membrane pass occupies residues 163–183; it reads IPMFAGFCIMFISTVMFAFSS. The Extracellular segment spans residues 184 to 192; the sequence is SYAFLLIAR. Residues 193–213 traverse the membrane as a helical segment; that stretch reads SLQGIGSSCSSVAGMGMLASV. Topologically, residues 214–222 are cytoplasmic; sequence YTDDEERGN. A helical membrane pass occupies residues 223–245; that stretch reads AMGIALGGLAMGVLVGPPFGSVL. The serotonin site is built by Leu-231 and Val-235. The Extracellular portion of the chain corresponds to 246 to 251; sequence YEFVGK. A helical membrane pass occupies residues 252 to 274; it reads TAPFLVLAALVLLDGAIQLFVLQ. Topologically, residues 275–294 are cytoplasmic; sequence PSRVQPESQKGTPLTTLLKD. A helical membrane pass occupies residues 295–314; that stretch reads PYILIAAGSICFANMGIAML. 5 residues coordinate serotonin: Asn-308, Ile-311, Glu-315, Phe-337, and Tyr-344. Residues 315–331 lie on the Extracellular side of the membrane; that stretch reads EPALPIWMMETMCSRKW. A helical membrane pass occupies residues 332-355; it reads QLGVAFLPASISYLIGTNIFGILA. Residues 356–360 are Cytoplasmic-facing; sequence HKMGR. Residues 361 to 381 traverse the membrane as a helical segment; the sequence is WLCALLGMIVVGISILCIPFA. Residues 382 to 392 are Extracellular-facing; sequence KNIYGLIAPNF. A helical membrane pass occupies residues 393 to 413; sequence GVGFAIGMVDSSMMPIMGYLV. Asp-402 lines the serotonin pocket. The Cytoplasmic portion of the chain corresponds to 414 to 417; that stretch reads DLRH. The chain crosses the membrane as a helical span at residues 418–438; that stretch reads VSVYGSVYAIADVAFCMGYAI. Residue Tyr-436 participates in serotonin binding. The Extracellular segment spans residues 439 to 443; that stretch reads GPSAG. A helical membrane pass occupies residues 444-465; it reads GAIAKAIGFPWLMTIIGIIDIV. Over 466–517 the chain is Cytoplasmic; the sequence is FAPLCFFLRSPPAKEEKMAILMDHNCPIKTKMYTQNNVQPYPVGDDEESESD. A phosphoserine; by CK2 mark is found at Ser-514 and Ser-516.

The protein belongs to the major facilitator superfamily. Vesicular transporter family. In terms of assembly, interacts with SLC6A3. As to expression, expressed in striata and substantia nigra.

The protein localises to the cytoplasmic vesicle. Its subcellular location is the secretory vesicle. It is found in the synaptic vesicle membrane. The protein resides in the secretory vesicle membrane. It localises to the cell projection. The protein localises to the axon. Its subcellular location is the dendrite. It carries out the reaction serotonin(in) + 2 H(+)(out) = serotonin(out) + 2 H(+)(in). The enzyme catalyses dopamine(in) + 2 H(+)(out) = dopamine(out) + 2 H(+)(in). The catalysed reaction is histamine(in) + 2 H(+)(out) = histamine(out) + 2 H(+)(in). With respect to regulation, strongly inhibited by reserpine and tetrabenazine. Also inhibited to a lesser extent by ketanserin and fenfluramine. Reserpine and ketanserin inhibit by blocking the substrate-binding pocket. Tetrabenazine traps SLC18A2/VMAT2 in an occluded conformation and its inhibition is specific to SLC18A2/VMAT2 but not SLC18A1/VMAT1. In terms of biological role, electrogenic antiporter that exchanges one cationic monoamine with two intravesicular protons across the membrane of secretory and synaptic vesicles. Uses the electrochemical proton gradient established by the V-type proton-pump ATPase to accumulate high concentrations of monoamines inside the vesicles prior to their release via exocytosis. Transports a variety of catecholamines such as dopamine, adrenaline and noradrenaline, histamine, and indolamines such as serotonin. Regulates the transvesicular monoaminergic gradient that determines the quantal size. Mediates somatodendritic dopamine release in hippocampal neurons, likely as part of a regulated secretory pathway that integrates retrograde synaptic signals. Acts as a primary transporter for striatal dopamine loading ensuring impulse-dependent release of dopamine at the synaptic cleft. Responsible for histamine and serotonin storage and subsequent corelease from mast cell granules. The polypeptide is Synaptic vesicular amine transporter (Slc18a2) (Mus musculus (Mouse)).